We begin with the raw amino-acid sequence, 2475 residues long: Polyprotein pp220 (2475 aa).

A lipid anchor (N-myristoyl glycine; by host) is attached at G2. The stretch at 2185–2212 (KNQLIADLTTIREQLVSMRREVENMIQT) forms a coiled coil.

Belongs to the asfivirus polyprotein pp220 family. In terms of processing, the polyprotein is not glycosylated. Post-translationally, specific enzymatic cleavages in vivo by the viral pS273R protease yield mature proteins.

The protein resides in the host cytoplasm. It is found in the host perinuclear region. The protein localises to the virion. Its subcellular location is the host nucleus. In terms of biological role, essential for the core assembly. Its myristoyl moiety may function as a membrane-anchoring signal to bind the developing core shell to the inner viral envelope. Its function is as follows. The structural protein p34 is a component of the virus core shell. Functionally, the structural protein p14 is a component of the virus core shell. The structural protein p37 is a component of the virus core shell. In terms of biological role, the structural protein p150 is a component of the virus core shell. The protein is Polyprotein pp220 of Ornithodoros (relapsing fever ticks).